We begin with the raw amino-acid sequence, 121 residues long: Small ribosomal subunit protein uS13 (121 aa).

Residues 92–121 (RKGLPCRGQRTRTNARTRKGPRKAAQSLKK) are disordered.

This sequence belongs to the universal ribosomal protein uS13 family. Part of the 30S ribosomal subunit. Forms a loose heterodimer with protein S19. Forms two bridges to the 50S subunit in the 70S ribosome.

In terms of biological role, located at the top of the head of the 30S subunit, it contacts several helices of the 16S rRNA. In the 70S ribosome it contacts the 23S rRNA (bridge B1a) and protein L5 of the 50S subunit (bridge B1b), connecting the 2 subunits; these bridges are implicated in subunit movement. Contacts the tRNAs in the A and P-sites. This Janthinobacterium sp. (strain Marseille) (Minibacterium massiliensis) protein is Small ribosomal subunit protein uS13.